A 548-amino-acid polypeptide reads, in one-letter code: Membrane protein insertase YidC (548 aa).

The chain crosses the membrane as a helical span at residues N6 to D26. The disordered stretch occupies residues N28–G56. Positions P29 to T42 are enriched in low complexity. 4 consecutive transmembrane segments (helical) span residues F350 to Y370, F424 to I444, L458 to I478, and P499 to V519.

It belongs to the OXA1/ALB3/YidC family. Type 1 subfamily. In terms of assembly, interacts with the Sec translocase complex via SecD. Specifically interacts with transmembrane segments of nascent integral membrane proteins during membrane integration.

The protein localises to the cell inner membrane. In terms of biological role, required for the insertion and/or proper folding and/or complex formation of integral membrane proteins into the membrane. Involved in integration of membrane proteins that insert both dependently and independently of the Sec translocase complex, as well as at least some lipoproteins. Aids folding of multispanning membrane proteins. The protein is Membrane protein insertase YidC of Salmonella choleraesuis (strain SC-B67).